We begin with the raw amino-acid sequence, 495 residues long: Siroheme synthase 2 (495 aa).

The interval 1 to 205 is precorrin-2 dehydrogenase /sirohydrochlorin ferrochelatase; that stretch reads MDHYPIFLNL…GREREAEQAM (205 aa). NAD(+)-binding positions include 22-23 and 43-44; these read ET and PD. S130 carries the post-translational modification Phosphoserine. A uroporphyrinogen-III C-methyltransferase region spans residues 220 to 495; sequence GEVYLVGAGP…HPAPADTEQA (276 aa). P229 contacts S-adenosyl-L-methionine. D252 (proton acceptor) is an active-site residue. K274 serves as the catalytic Proton donor. S-adenosyl-L-methionine contacts are provided by residues 305–307, I310, 335–336, M387, and A416; these read GGD and TA. Residues 471–495 form a disordered region; that stretch reads FPEHGCLRGEPRPTRHPAPADTEQA.

In the N-terminal section; belongs to the precorrin-2 dehydrogenase / sirohydrochlorin ferrochelatase family. This sequence in the C-terminal section; belongs to the precorrin methyltransferase family.

It catalyses the reaction uroporphyrinogen III + 2 S-adenosyl-L-methionine = precorrin-2 + 2 S-adenosyl-L-homocysteine + H(+). The catalysed reaction is precorrin-2 + NAD(+) = sirohydrochlorin + NADH + 2 H(+). It carries out the reaction siroheme + 2 H(+) = sirohydrochlorin + Fe(2+). The protein operates within cofactor biosynthesis; adenosylcobalamin biosynthesis; precorrin-2 from uroporphyrinogen III: step 1/1. It functions in the pathway cofactor biosynthesis; adenosylcobalamin biosynthesis; sirohydrochlorin from precorrin-2: step 1/1. It participates in porphyrin-containing compound metabolism; siroheme biosynthesis; precorrin-2 from uroporphyrinogen III: step 1/1. Its pathway is porphyrin-containing compound metabolism; siroheme biosynthesis; siroheme from sirohydrochlorin: step 1/1. The protein operates within porphyrin-containing compound metabolism; siroheme biosynthesis; sirohydrochlorin from precorrin-2: step 1/1. Multifunctional enzyme that catalyzes the SAM-dependent methylations of uroporphyrinogen III at position C-2 and C-7 to form precorrin-2 via precorrin-1. Then it catalyzes the NAD-dependent ring dehydrogenation of precorrin-2 to yield sirohydrochlorin. Finally, it catalyzes the ferrochelation of sirohydrochlorin to yield siroheme. The protein is Siroheme synthase 2 of Halorhodospira halophila (strain DSM 244 / SL1) (Ectothiorhodospira halophila (strain DSM 244 / SL1)).